Here is a 496-residue protein sequence, read N- to C-terminus: Lysine--tRNA ligase (496 aa).

The Mg(2+) site is built by Glu408 and Glu415.

The protein belongs to the class-II aminoacyl-tRNA synthetase family. Homodimer. The cofactor is Mg(2+).

Its subcellular location is the cytoplasm. It carries out the reaction tRNA(Lys) + L-lysine + ATP = L-lysyl-tRNA(Lys) + AMP + diphosphate. In Legionella pneumophila (strain Lens), this protein is Lysine--tRNA ligase.